A 209-amino-acid chain; its full sequence is MIGLVGKKVGMTRIFTEDGVSIPVTVIEVEANRVTQVKDLANDGYRAVQVTTGSKKASRVTKPEAGHFAKAGVEAGRGLWEFRLAEGEEFTVGQDISVELFAEVKKVDVTGTSKGKGFAGTVKRWNFRTQDATHGNSLSHRVPGSIGQNQTPGKVFKGKKMAGQMGNERVTVQSLDVVRVDAERNLLLVKGAVPGATGSNLIVKPAVKA.

Residues 132 to 153 (ATHGNSLSHRVPGSIGQNQTPG) are disordered. At Q150 the chain carries N5-methylglutamine.

The protein belongs to the universal ribosomal protein uL3 family. In terms of assembly, part of the 50S ribosomal subunit. Forms a cluster with proteins L14 and L19. Methylated by PrmB.

In terms of biological role, one of the primary rRNA binding proteins, it binds directly near the 3'-end of the 23S rRNA, where it nucleates assembly of the 50S subunit. In Enterobacter sp. (strain 638), this protein is Large ribosomal subunit protein uL3.